A 267-amino-acid polypeptide reads, in one-letter code: MMELETGQCTIMELKKENVKELAQVFKTVAFKDTGTWHASEAGMKITVDDGSYQLASVFINPAFFSSFKVREEIVSMKISIKSISEFLSISENSSSSVKVSYPGMFQPVKMLVEDADGWVARGNFTTTLADQELDFEFDDAGVLATYLLKTQVLKEIIKDFDDTSRTVRIQFTKNSLCFTTFGDVGETTVSIPSRSLQMESVKCLEEVEFSYLLSLIQRMTTAFILATKLILRVDERGVLSCQFSIDHGEGNASYIEFLTVPADEEE.

The protein belongs to the Rad1 family. Probable component of the toroidal 9-1-1 (RAD9-RAD1-HUS1) complex, composed of hpr-9, mrt-2 and hus-1. Interacts with hus-1. Might associate with hpr-9.

It localises to the nucleus. The enzyme catalyses Exonucleolytic cleavage in the 3'- to 5'-direction to yield nucleoside 5'-phosphates.. Its function is as follows. May be a component of the 9-1-1 cell-cycle checkpoint response complex that plays a major role in DNA repair. Promotes DNA double strand break-induced cell cycle arrest and apoptosis, thereby playing a role in genome stability. Also required for telomere length maintenance and germline immortality. May possess 3'-&gt;5' double stranded DNA exonuclease activity. The sequence is that of Cell cycle checkpoint protein RAD1 homolog mrt-2 from Caenorhabditis elegans.